Here is a 370-residue protein sequence, read N- to C-terminus: Anhydro-N-acetylmuramic acid kinase (370 aa).

Residue 12 to 19 (GTSLDGID) participates in ATP binding.

The protein belongs to the anhydro-N-acetylmuramic acid kinase family.

The enzyme catalyses 1,6-anhydro-N-acetyl-beta-muramate + ATP + H2O = N-acetyl-D-muramate 6-phosphate + ADP + H(+). The protein operates within amino-sugar metabolism; 1,6-anhydro-N-acetylmuramate degradation. It participates in cell wall biogenesis; peptidoglycan recycling. Functionally, catalyzes the specific phosphorylation of 1,6-anhydro-N-acetylmuramic acid (anhMurNAc) with the simultaneous cleavage of the 1,6-anhydro ring, generating MurNAc-6-P. Is required for the utilization of anhMurNAc either imported from the medium or derived from its own cell wall murein, and thus plays a role in cell wall recycling. This chain is Anhydro-N-acetylmuramic acid kinase, found in Yersinia enterocolitica serotype O:8 / biotype 1B (strain NCTC 13174 / 8081).